The following is a 476-amino-acid chain: Bifunctional protein HldE (476 aa).

The interval Met-1–Gly-319 is ribokinase. Position 195–198 (Asn-195–Glu-198) interacts with ATP. Asp-264 is an active-site residue. A cytidylyltransferase region spans residues Met-344–Gly-476.

This sequence in the N-terminal section; belongs to the carbohydrate kinase PfkB family. The protein in the C-terminal section; belongs to the cytidylyltransferase family. Homodimer.

It carries out the reaction D-glycero-beta-D-manno-heptose 7-phosphate + ATP = D-glycero-beta-D-manno-heptose 1,7-bisphosphate + ADP + H(+). The enzyme catalyses D-glycero-beta-D-manno-heptose 1-phosphate + ATP + H(+) = ADP-D-glycero-beta-D-manno-heptose + diphosphate. Its pathway is nucleotide-sugar biosynthesis; ADP-L-glycero-beta-D-manno-heptose biosynthesis; ADP-L-glycero-beta-D-manno-heptose from D-glycero-beta-D-manno-heptose 7-phosphate: step 1/4. The protein operates within nucleotide-sugar biosynthesis; ADP-L-glycero-beta-D-manno-heptose biosynthesis; ADP-L-glycero-beta-D-manno-heptose from D-glycero-beta-D-manno-heptose 7-phosphate: step 3/4. In terms of biological role, catalyzes the phosphorylation of D-glycero-D-manno-heptose 7-phosphate at the C-1 position to selectively form D-glycero-beta-D-manno-heptose-1,7-bisphosphate. Catalyzes the ADP transfer from ATP to D-glycero-beta-D-manno-heptose 1-phosphate, yielding ADP-D-glycero-beta-D-manno-heptose. This Aliivibrio fischeri (strain ATCC 700601 / ES114) (Vibrio fischeri) protein is Bifunctional protein HldE.